We begin with the raw amino-acid sequence, 1213 residues long: Chitin synthase 3 (1213 aa).

The interval 1–97 (MSNFRDSSSP…TPPHQEEEED (97 aa)) is disordered. At 1-168 (MSNFRDSSSP…KPKHDIYFWK (168 aa)) the chain is on the cytoplasmic side. Positions 32–44 (IRPERSRMDESHP) are enriched in basic and acidic residues. Residues 75–87 (ELSTSRSHLSNYA) show a composition bias toward polar residues. Residues 169–189 (VYCYAITFWAPAPLLKLFGLP) traverse the membrane as a helical segment. The Extracellular segment spans residues 190–200 (TKDRQFAWREK). The helical transmembrane segment at 201-221 (IGLISCILYVGAFVAYLTFGF) threads the bilayer. The Cytoplasmic portion of the chain corresponds to 222–450 (TKTVCSSQVV…TDTIGCIASK (229 aa)). Residues 451–471 (VVLYMSLVFILSVVVVKFIMA) traverse the membrane as a helical segment. Over 472-1016 (CWFKWVTSRK…INSTVHNLFE (545 aa)) the chain is Extracellular. Residues N588 and N1008 are each glycosylated (N-linked (GlcNAc...) asparagine). Residues 1017 to 1037 (LVLVKDLCGTFCFSMQFVIFI) traverse the membrane as a helical segment. The Cytoplasmic portion of the chain corresponds to 1038–1039 (EL). A helical membrane pass occupies residues 1040–1060 (IGTLVLPAAITFTIYVIIVAI). The Extracellular segment spans residues 1061–1065 (VSKPT). Residues 1066–1086 (PVMSLVLLAVIFGLPGCLIVI) form a helical membrane-spanning segment. Residues 1087-1213 (TVSSLSYLVY…LSQGSSSGSS (127 aa)) are Cytoplasmic-facing. Residues 1161–1213 (ERRSTENRKQQQQQQLTNNSSNNLAVPGAAWDPSNTGGNLIDDLSQGSSSGSS) form a disordered region.

Belongs to the chitin synthase family. Class IV subfamily.

It localises to the cell membrane. It carries out the reaction [(1-&gt;4)-N-acetyl-beta-D-glucosaminyl](n) + UDP-N-acetyl-alpha-D-glucosamine = [(1-&gt;4)-N-acetyl-beta-D-glucosaminyl](n+1) + UDP + H(+). In terms of biological role, polymerizes chitin, a structural polymer of the cell wall and septum, by transferring the sugar moiety of UDP-GlcNAc to the non-reducing end of the growing chitin polymer. This is Chitin synthase 3 (CHS3) from Candida albicans (Yeast).